The following is an 89-amino-acid chain: UPF0237 protein CPE1496 (89 aa).

The ACT domain occupies 4–84; the sequence is VITVVGKDKV…ISVQHEDIFN (81 aa).

The protein belongs to the UPF0237 family.

This Clostridium perfringens (strain 13 / Type A) protein is UPF0237 protein CPE1496.